We begin with the raw amino-acid sequence, 344 residues long: Ferrochelatase (344 aa).

Residues His214 and Glu295 each contribute to the Fe cation site.

Belongs to the ferrochelatase family.

Its subcellular location is the cytoplasm. The catalysed reaction is heme b + 2 H(+) = protoporphyrin IX + Fe(2+). It functions in the pathway porphyrin-containing compound metabolism; protoheme biosynthesis; protoheme from protoporphyrin-IX: step 1/1. Functionally, catalyzes the ferrous insertion into protoporphyrin IX. This is Ferrochelatase from Rhizobium johnstonii (strain DSM 114642 / LMG 32736 / 3841) (Rhizobium leguminosarum bv. viciae).